Reading from the N-terminus, the 605-residue chain is Solute carrier family 23 member 1 (605 aa).

A disordered region spans residues 1 to 30; the sequence is MKTPEDPGSPKQHEVVDSAGTSTRDRQAPL. At 1–59 the chain is on the cytoplasmic side; the sequence is MKTPEDPGSPKQHEVVDSAGTSTRDRQAPLPTEPKFDMLYKIEDVPPWYLCILLGFQHY. A helical membrane pass occupies residues 60–80; the sequence is LTCFSGTIAVPFLLAEALCVG. Residues 81–88 are Extracellular-facing; the sequence is RDQHMVSQ. A helical membrane pass occupies residues 89-109; the sequence is LIGTIFTCVGITTLIQTTVGI. Position 110 (Arg110) is a topological domain, cytoplasmic. Residues 111 to 131 traverse the membrane as a helical segment; that stretch reads LPLFQASAFAFLVPAKSILAL. Residues 132-166 lie on the Extracellular side of the membrane; that stretch reads ERWKCPSEEEIYGNWSMPLNTSHIWHPRIREVQGA. 2 N-linked (GlcNAc...) asparagine glycosylation sites follow: Asn145 and Asn151. A helical membrane pass occupies residues 167 to 187; the sequence is IMVSSMVEVVIGLMGLPGALL. Topologically, residues 188 to 214 are cytoplasmic; the sequence is SYIGPLTVTPTVSLIGLSVFQAAGDRA. Residues 215 to 232 form a helical membrane-spanning segment; it reads GSHWGISACSILLIVLFS. Residues 233–236 lie on the Extracellular side of the membrane; it reads QYLR. Positions 237–250 form an intramembrane region, helical; sequence NLTFLLPVYRWGKG. Residues 251 to 257 are Extracellular-facing; sequence LTLFRVQ. A helical transmembrane segment spans residues 258 to 278; the sequence is IFKMFPIVLAIMTVWLLCYVL. The Cytoplasmic portion of the chain corresponds to 279–319; that stretch reads TLTDVLPADPTVYGFQARTDARGDIMAISPWIRIPYPCQWG. The helical transmembrane segment at 320 to 340 threads the bilayer; it reads LPTVTVAAVLGMFSATLAGII. The Extracellular segment spans residues 341 to 365; it reads ESIGDYYACARLAGAPPPPVHAINR. Residues 366–386 traverse the membrane as a helical segment; sequence GIFTEGICCIIAGLLGTGNGS. Residues 387-409 are Cytoplasmic-facing; that stretch reads TSSSPNIGVLGITKVGSRRVVQY. A helical membrane pass occupies residues 410-430; the sequence is GAGIMLILGAIGKFTALFASL. Over 431 to 433 the chain is Extracellular; that stretch reads PDP. The helical transmembrane segment at 434 to 454 threads the bilayer; that stretch reads ILGGMFCTLFGMITAVGLSNL. The Cytoplasmic portion of the chain corresponds to 455–464; the sequence is QFVDMNSSRN. A helical transmembrane segment spans residues 465 to 485; it reads LFVLGFSMFFGLTLPNYLDSN. At 486–497 the chain is on the extracellular side; that stretch reads PGAINTGIPEVD. A helical membrane pass occupies residues 498–518; the sequence is QILTVLLTTEMFVGGCLAFIL. At 519 to 605 the chain is on the cytoplasmic side; that stretch reads DNTVPGSPEE…IETGSVCTKV (87 aa). Residue Thr598 is modified to Phosphothreonine. At Ser600 the chain carries Phosphoserine. Position 603 is a phosphothreonine (Thr603).

Belongs to the nucleobase:cation symporter-2 (NCS2) (TC 2.A.40) family. Post-translationally, phosphorylated. Expressed in kidney (at protein level).

It localises to the cell membrane. The catalysed reaction is L-ascorbate(out) + 2 Na(+)(out) = L-ascorbate(in) + 2 Na(+)(in). It catalyses the reaction urate(out) + 2 Na(+)(out) = urate(in) + 2 Na(+)(in). Functionally, sodium:L-ascorbate cotransporter. Mediates electrogenic uptake of vitamin C, with a stoichiometry of 2 Na(+) for each L-ascorbate. Has retained some ancestral activity toward nucleobases such as urate, an oxidized purine. Low-affinity high-capacity sodium:urate cotransporter, may regulate serum urate levels by serving as a renal urate re-absorber. The chain is Solute carrier family 23 member 1 (Slc23a1) from Mus musculus (Mouse).